We begin with the raw amino-acid sequence, 132 residues long: SH2 domain-containing protein 1B2 (132 aa).

Positions 5 to 101 (YYHGCLTKRE…GMVVHLSNPI (97 aa)) constitute an SH2 domain.

Interacts with SLAMF1 (phosphorylated). Interacts with CD244. Interacts with Src kinases HCK, LYN, FYN, FGR and LCK (via kinase domains). In terms of tissue distribution, expressed in spleen. Expressed in macrophages, CD8(+) T-Cells and NK cells. Conflictingly found only in NK cells.

It is found in the cytoplasm. In terms of biological role, cytoplasmic adapter regulating receptors of the signaling lymphocytic activation molecule (SLAM) family. In SLAM signaling may cooperate with Sh2d1a/SAP. Plays a role in regulation of effector functions of natural killer (NK) cells by controlling signal transduction through Cd244/2b4. However, conflicting results are reported which may reflect the use of different strain backgrounds. Proposed to act as an inhibitor of Cd244-mediated NK cell function including cytotoxicity and IFN-gamma production, the latter found also by triggering Klra4 and Klrk1 next to Cd244. Seems to positively regulate Cd244- and Cd84-dependent NK cell functions implicating Cd244-mediated phosphorylation of Vav1. The protein is SH2 domain-containing protein 1B2 (Sh2d1b2) of Mus musculus (Mouse).